The primary structure comprises 457 residues: Argininosuccinate lyase (457 aa).

This sequence belongs to the lyase 1 family. Argininosuccinate lyase subfamily.

It is found in the cytoplasm. The catalysed reaction is 2-(N(omega)-L-arginino)succinate = fumarate + L-arginine. It functions in the pathway amino-acid biosynthesis; L-arginine biosynthesis; L-arginine from L-ornithine and carbamoyl phosphate: step 3/3. The sequence is that of Argininosuccinate lyase from Aquifex aeolicus (strain VF5).